The chain runs to 482 residues: UDP-N-acetylmuramoyl-L-alanyl-D-glutamate--2,6-diaminopimelate ligase (482 aa).

S24 serves as a coordination point for UDP-N-acetyl-alpha-D-muramoyl-L-alanyl-D-glutamate. 105 to 111 (GTNGKTT) serves as a coordination point for ATP. Residues 147 to 148 (TT), S174, Q180, and R182 contribute to the UDP-N-acetyl-alpha-D-muramoyl-L-alanyl-D-glutamate site. N6-carboxylysine is present on K214. Meso-2,6-diaminopimelate-binding positions include R378, 402-405 (DNPR), G453, and E457. The Meso-diaminopimelate recognition motif motif lies at 402–405 (DNPR).

It belongs to the MurCDEF family. MurE subfamily. It depends on Mg(2+) as a cofactor. Post-translationally, carboxylation is probably crucial for Mg(2+) binding and, consequently, for the gamma-phosphate positioning of ATP.

The protein localises to the cytoplasm. It catalyses the reaction UDP-N-acetyl-alpha-D-muramoyl-L-alanyl-D-glutamate + meso-2,6-diaminopimelate + ATP = UDP-N-acetyl-alpha-D-muramoyl-L-alanyl-gamma-D-glutamyl-meso-2,6-diaminopimelate + ADP + phosphate + H(+). The protein operates within cell wall biogenesis; peptidoglycan biosynthesis. Functionally, catalyzes the addition of meso-diaminopimelic acid to the nucleotide precursor UDP-N-acetylmuramoyl-L-alanyl-D-glutamate (UMAG) in the biosynthesis of bacterial cell-wall peptidoglycan. This Lawsonia intracellularis (strain PHE/MN1-00) protein is UDP-N-acetylmuramoyl-L-alanyl-D-glutamate--2,6-diaminopimelate ligase.